A 245-amino-acid polypeptide reads, in one-letter code: 2,3-bisphosphoglycerate-dependent phosphoglycerate mutase (245 aa).

Residues arginine 8 to asparagine 15, threonine 21 to glycine 22, arginine 60, glutamate 87 to tyrosine 90, lysine 98, arginine 114 to arginine 115, and glycine 183 to asparagine 184 each bind substrate. Histidine 9 acts as the Tele-phosphohistidine intermediate in catalysis. Glutamate 87 (proton donor/acceptor) is an active-site residue.

This sequence belongs to the phosphoglycerate mutase family. BPG-dependent PGAM subfamily.

It carries out the reaction (2R)-2-phosphoglycerate = (2R)-3-phosphoglycerate. The protein operates within carbohydrate degradation; glycolysis; pyruvate from D-glyceraldehyde 3-phosphate: step 3/5. In terms of biological role, catalyzes the interconversion of 2-phosphoglycerate and 3-phosphoglycerate. The sequence is that of 2,3-bisphosphoglycerate-dependent phosphoglycerate mutase from Bacillus anthracis (strain A0248).